The sequence spans 312 residues: 2,3-dihydroxyphenylpropionate/2,3-dihydroxicinnamic acid 1,2-dioxygenase 1 (312 aa).

Catalysis depends on His115, which acts as the Proton donor. His179 serves as the catalytic Proton acceptor.

The protein belongs to the LigB/MhpB extradiol dioxygenase family. As to quaternary structure, homotetramer. The cofactor is Fe(2+).

It catalyses the reaction 3-(2,3-dihydroxyphenyl)propanoate + O2 = (2Z,4E)-2-hydroxy-6-oxonona-2,4-dienedioate + H(+). It carries out the reaction (2E)-3-(2,3-dihydroxyphenyl)prop-2-enoate + O2 = (2Z,4E,7E)-2-hydroxy-6-oxonona-2,4,7-trienedioate + H(+). It participates in aromatic compound metabolism; 3-phenylpropanoate degradation. Catalyzes the non-heme iron(II)-dependent oxidative cleavage of 2,3-dihydroxyphenylpropionic acid and 2,3-dihydroxicinnamic acid into 2-hydroxy-6-ketononadienedioate and 2-hydroxy-6-ketononatrienedioate, respectively. This is 2,3-dihydroxyphenylpropionate/2,3-dihydroxicinnamic acid 1,2-dioxygenase 1 from Dechloromonas aromatica (strain RCB).